The primary structure comprises 584 residues: MSTICAGGQTLESKYGGRAPPQIQLPDRQWPSKKLTESPIWLSTDLRDGNQALPNPMTTSQKWQMFRLLVDIGFKQIEVSFPCASDTEYTFTRALVETPGAVPDDVSLEVMTPCRKETLVRAVESLKGAKKAILFTYLATSDNYRETILQRSEAETLEHVRDCIEYARAITKEDPEARQTEWSLGFGMEDFANARPDAALRLAEVIQAAWQPSRENPVILGLASSVEAATVNIFADQVEYFSRHLSSRETVCISIHTHNDRGGAAAAAELACLAGGDRVEGCLFGNGERAGNLDLVTAAMNCFTQGMETGLDFSNLPEIRRVYESITQLPVHPRTPYSGDYYFRAFSGAHQDAIRKGLQKRAANSSKSPWKVPYLPLDPADLGVSFDNVIGVNSQSGKGGVAWLIQNGLALSIPTQLAASFSHVVKEQSVAQERGLAAEEICALFADRYDLRDSPSGRVVREHGYIAAFQHPGCALELEDVTEQAARAAGILTRGLDFLLRCTRAASHPLGGPDDSNLTVAFVQCAVTEKAEEAWGIGIGFSQDSAIDRALLSVMNRHYQPTPIRAPLATNDSVIPRPEPIRGG.

In terms of domain architecture, Pyruvate carboxyltransferase spans 39–317; sequence PIWLSTDLRD…ETGLDFSNLP (279 aa).

The protein belongs to the alpha-IPM synthase/homocitrate synthase family. LeuA type 2 subfamily.

The enzyme catalyses 3-methyl-2-oxobutanoate + acetyl-CoA + H2O = (2S)-2-isopropylmalate + CoA + H(+). It participates in antifungal biosynthesis. Isopropyl malate synthase; part of the gene cluster that mediates the de novo generation of L-homotyrosine from acetyl-CoA and 4-hydroxyphenyl-pyruvate. L-homotyrosine is a building block of echinocandin B, a fungal lipidated cyclic hexapeptide that acts as an antifungal agent. L-homotyrosine 4-hydroxyphenyl-pyruvate first undergoes an aldol-type condensation by htyA with the C-2 of acetyl-CoA followed by the release of CoA to form 2-(4-hydroxybenzyl)-malate. This is followed by isomerization of 2-(4-hydroxy-benzyl)-malate to 3-(4-hydroxybenzyl)-malate by htyD. Thereafter, 3-(4-hydroxybenzyl)-malate undergoes decarboxylation and oxidation to form 2-oxo-4-(4-hydroxybenzyl)butanoic acid, coupled to reduction of NAD(+) to NADH by htyC. The product then undergoes transamination catalyzed by htyB to form L-homotyrosine. The protein is Isopropyl malate synthase htyA of Aspergillus rugulosus (Emericella rugulosa).